The primary structure comprises 325 residues: mRNA decay activator protein ZFP36 (325 aa).

The tract at residues 1 to 15 (MDLAAIYKSLLSLSP) is necessary for nuclear export. The segment at 1-98 (MDLAAIYKSL…PTSPTATPTT (98 aa)) is necessary and sufficient for the association with mRNA decay enzymes and mRNA decay activation. Necessary for localization of ARE-containing mRNAs to processing bodies (PBs) stretches follow at residues 1 to 172 (MDLA…DLAA) and 98 to 325 (TSSR…SVSE). Residues 15-48 (PELPSDLGETESSTSWASSGPWSLSSSDSSLPEA) are compositionally biased toward low complexity. Residues 15–101 (PELPSDLGET…PTATPTTSSR (87 aa)) form a disordered region. The residue at position 58 (Ser58) is a Phosphoserine; by MAPKAPK2. A Phosphoserine modification is found at Ser64. The P-P-P-P-G repeat unit spans residues 69-73 (PPPPG). The span at 75-101 (APLAPRPSSELSPSPTSPTATPTTSSR) shows a compositional bias: low complexity. A phosphoserine mark is found at Ser86 and Ser88. Thr90 is modified (phosphothreonine). Ser91 is modified (phosphoserine). The necessary for nuclear localization stretch occupies residues 93 to 166 (TATPTTSSRY…GSRCHFIHNP (74 aa)). Positions 95–171 (TPTTSSRYKT…FIHNPSEDLA (77 aa)) are necessary for RNA-binding. 2 C3H1-type zinc fingers span residues 101-129 (RYKT…HGLG) and 139-167 (KYKT…HNPS). The segment at 101 to 192 (RYKTELCRTF…ISFSGLPSGR (92 aa)) is necessary for interaction with PABPN1. Phosphoserine is present on Ser167. A necessary for mRNA decay activation region spans residues 172–325 (APGHPHVLRQ…PIFNRISVSE (154 aa)). Residue Ser184 is modified to Phosphoserine; by MAPKAPK2. Disordered stretches follow at residues 185-248 (FSGL…TPAC) and 260-325 (VWGP…SVSE). Ser195 carries the phosphoserine modification. The P-P-P-P-G repeat unit spans residues 196-200 (PPPAS). Low complexity predominate over residues 204-214 (PSVPSWSFSPS). The residue at position 216 (Ser216) is a Phosphoserine. Residues 217–222 (PPPPPG) form a P-P-P-P-G repeat. Ser227 is subject to Phosphoserine; by MAPK1; in vitro. Phosphoserine occurs at positions 275, 295, and 322. Low complexity predominate over residues 285 to 295 (SSGSSLGGSDS). The interaction with CNOT1 stretch occupies residues 311 to 325 (APRRLPIFNRISVSE).

Associates with cytoplasmic CCR4-NOT and PAN2-PAN3 deadenylase complexes to trigger ARE-containing mRNA deadenylation and decay processes. Part of a mRNA decay activation complex at least composed of poly(A)-specific exoribonucleases CNOT6, EXOSC2 and XRN1 and mRNA-decapping enzymes DCP1A and DCP2. Associates with the RNA exosome complex. Interacts (via phosphorylated form) with 14-3-3 proteins; these interactions promote exclusion of ZFP36 from cytoplasmic stress granules in response to arsenite treatment in a MAPKAPK2-dependent manner and does not prevent CCR4-NOT deadenylase complex recruitment or ZFP36-induced ARE-containing mRNA deadenylation and decay processes. Interacts with 14-3-3 proteins; these interactions occur in response to rapamycin in an Akt-dependent manner. Interacts with AGO2 and AGO4. Interacts (via C-terminus) with CNOT1; this interaction occurs in a RNA-independent manner and induces mRNA deadenylation. Interacts (via N-terminus) with CNOT6. Interacts with CNOT6L. Interacts (via C-terminus) with CNOT7; this interaction occurs in a RNA-independent manner, induces mRNA deadenylation and is inhibited in a phosphorylation MAPKAPK2-dependent manner. Interacts (via unphosphorylated form) with CNOT8; this interaction occurs in a RNA-independent manner and is inhibited in a phosphorylation MAPKAPK2-dependent manner. Interacts with DCP1A. Interacts (via N-terminus) with DCP2. Interacts with EDC3. Interacts (via N-terminus) with EXOSC2. Interacts with heat shock 70 kDa proteins. Interacts with KHSRP; this interaction increases upon cytokine-induced treatment. Interacts with MAP3K4; this interaction enhances the association with SH3KBP1/CIN85. Interacts with MAPKAPK2; this interaction occurs upon skeletal muscle satellite cell activation. Interacts with NCL. Interacts with NUP214; this interaction increases upon lipopolysaccharide (LPS) stimulation. Interacts with PABPC1; this interaction occurs in a RNA-dependent manner. Interacts (via hypophosphorylated form) with PABPN1 (via RRM domain and C-terminal arginine-rich region); this interaction occurs in the nucleus in a RNA-independent manner, decreases in presence of single-stranded poly(A) RNA-oligomer and in a p38 MAPK-dependent-manner and inhibits nuclear poly(A) tail synthesis. Interacts with PAN2. Interacts (via C3H1-type zinc finger domains) with PKM. Interacts (via C3H1-type zinc finger domains) with nuclear RNA poly(A) polymerase. Interacts with PPP2CA; this interaction occurs in LPS-stimulated cells and induces ZFP36 dephosphorylation, and hence may promote ARE-containing mRNAs decay. Interacts (via C-terminus) with PRR5L (via C-terminus); this interaction may accelerate ZFP36-mediated mRNA decay during stress. Interacts (via C-terminus) with SFN; this interaction occurs in a phosphorylation-dependent manner. Interacts (via extreme C-terminal region) with SH3KBP1/CIN85 (via SH3 domains); this interaction enhances MAP3K4-induced phosphorylation of ZFP36 at Ser-64 and Ser-91 and does not alter neither ZFP36 binding to ARE-containing transcripts nor TNF-alpha mRNA decay. Interacts with XRN1. Interacts (via C-terminus and Ser-184 phosphorylated form) with YWHAB; this interaction occurs in a p38/MAPKAPK2-dependent manner, increases cytoplasmic localization of ZFP36 and protects ZFP36 from Ser-184 dephosphorylation by serine/threonine phosphatase 2A, and hence may be crucial for stabilizing ARE-containing mRNAs. Interacts (via phosphorylated form) with YWHAE. Interacts (via C-terminus) with YWHAG; this interaction occurs in a phosphorylation-dependent manner. Interacts with YWHAH; this interaction occurs in a phosphorylation-dependent manner. Interacts with YWHAQ; this interaction occurs in a phosphorylation-dependent manner. Interacts with (via C-terminus) YWHAZ; this interaction occurs in a phosphorylation-dependent manner. Does not interact with SH3KBP1. Interacts (via P-P-P-P-G repeats) with GIGYF2; the interaction is direct. In terms of processing, phosphorylated. Phosphorylation at serine and/or threonine residues occurs in a p38 MAPK- and MAPKAPK2-dependent manner. Phosphorylated by MAPKAPK2 at Ser-58 and Ser-184; phosphorylation increases its stability and cytoplasmic localization, promotes binding to 14-3-3 adapter proteins and inhibits the recruitment of cytoplasmic CCR4-NOT and PAN2-PAN3 deadenylase complexes to the mRNA decay machinery, thereby inhibiting ZFP36-induced ARE-containing mRNA deadenylation and decay processes. Phosphorylation by MAPKAPK2 does not impair ARE-containing RNA-binding. Phosphorylated in a MAPKAPK2- and p38 MAPK-dependent manner upon skeletal muscle satellite cell activation; this phosphorylation inhibits ZFP36-mediated mRNA decay activity, and hence stabilizes MYOD1 mRNA. Phosphorylated by MAPK1 upon mitogen stimulation. Phosphorylated at Ser-64 and Ser-91; these phosphorylations increase in a SH3KBP1-dependent manner. Phosphorylated at serine and threonine residues in a pyruvate kinase PKM- and p38 MAPK-dependent manner. Phosphorylation at Ser-58 may participate in the PKM-mediated degradation of ZFP36 in a p38 MAPK-dependent manner. Dephosphorylated by serine/threonine phosphatase 2A at Ser-184. Post-translationally, ubiquitinated; pyruvate kinase (PKM)-dependent ubiquitination leads to proteasomal degradation through a p38 MAPK signaling pathway.

The protein resides in the nucleus. The protein localises to the cytoplasm. It localises to the cytoplasmic granule. It is found in the P-body. Functionally, zinc-finger RNA-binding protein that destabilizes numerous cytoplasmic AU-rich element (ARE)-containing mRNA transcripts by promoting their poly(A) tail removal or deadenylation, and hence provide a mechanism for attenuating protein synthesis. Acts as an 3'-untranslated region (UTR) ARE mRNA-binding adapter protein to communicate signaling events to the mRNA decay machinery. Recruits deadenylase CNOT7 (and probably the CCR4-NOT complex) via association with CNOT1, and hence promotes ARE-mediated mRNA deadenylation. Also functions by recruiting components of the cytoplasmic RNA decay machinery to the bound ARE-containing mRNAs. Self regulates by destabilizing its own mRNA. Binds to 3'-UTR ARE of numerous mRNAs. Also binds to ARE of its own mRNA. Plays a role in anti-inflammatory responses; suppresses tumor necrosis factor (TNF)-alpha production by stimulating ARE-mediated TNF-alpha mRNA decay and several other inflammatory ARE-containing mRNAs in interferon (IFN)- and/or lipopolysaccharide (LPS)-induced macrophages. Also plays a role in the regulation of dendritic cell maturation at the post-transcriptional level, and hence operates as part of a negative feedback loop to limit the inflammatory response. Promotes ARE-mediated mRNA decay of hypoxia-inducible factor HIF1A mRNA during the response of endothelial cells to hypoxia. Positively regulates early adipogenesis of preadipocytes by promoting ARE-mediated mRNA decay of immediate early genes (IEGs). Negatively regulates hematopoietic/erythroid cell differentiation by promoting ARE-mediated mRNA decay of the transcription factor STAT5B mRNA. Plays a role in maintaining skeletal muscle satellite cell quiescence by promoting ARE-mediated mRNA decay of the myogenic determination factor MYOD1 mRNA. Also associates with and regulates the expression of non-ARE-containing target mRNAs at the post-transcriptional level, such as MHC class I mRNAs. Participates in association with argonaute RISC catalytic components in the ARE-mediated mRNA decay mechanism; assists microRNA (miRNA) targeting ARE-containing mRNAs. May also play a role in the regulation of cytoplasmic mRNA decapping; enhances decapping of ARE-containing RNAs, in vitro. Involved in the delivery of target ARE-mRNAs to processing bodies (PBs). In addition to its cytosolic mRNA-decay function, affects nuclear pre-mRNA processing. Negatively regulates nuclear poly(A)-binding protein PABPN1-stimulated polyadenylation activity on ARE-containing pre-mRNA during LPS-stimulated macrophages. Also involved in the regulation of stress granule (SG) and P-body (PB) formation and fusion. Plays a role in the regulation of keratinocyte proliferation, differentiation and apoptosis. Plays a role as a tumor suppressor by inhibiting cell proliferation in breast cancer cells. This is mRNA decay activator protein ZFP36 from Ovis aries (Sheep).